Consider the following 175-residue polypeptide: ATP synthase subunit b (175 aa).

The chain crosses the membrane as a helical span at residues 20-40; the sequence is LIFWTAITFVIVLLILKKIAW.

Belongs to the ATPase B chain family. As to quaternary structure, F-type ATPases have 2 components, F(1) - the catalytic core - and F(0) - the membrane proton channel. F(1) has five subunits: alpha(3), beta(3), gamma(1), delta(1), epsilon(1). F(0) has four main subunits: a(1), b(2) and c(10-14). The alpha and beta chains form an alternating ring which encloses part of the gamma chain. F(1) is attached to F(0) by a central stalk formed by the gamma and epsilon chains, while a peripheral stalk is formed by the delta and b chains.

The protein resides in the cell inner membrane. F(1)F(0) ATP synthase produces ATP from ADP in the presence of a proton or sodium gradient. F-type ATPases consist of two structural domains, F(1) containing the extramembraneous catalytic core and F(0) containing the membrane proton channel, linked together by a central stalk and a peripheral stalk. During catalysis, ATP synthesis in the catalytic domain of F(1) is coupled via a rotary mechanism of the central stalk subunits to proton translocation. Its function is as follows. Component of the F(0) channel, it forms part of the peripheral stalk, linking F(1) to F(0). This is ATP synthase subunit b from Chlorobium chlorochromatii (strain CaD3).